The primary structure comprises 3068 residues: Highly reducing polyketide synthase 17 (3068 aa).

One can recognise a Ketosynthase family 3 (KS3) domain in the interval 100–526; sequence IEPIAIVGAS…GTNAHAIMER (427 aa). Residues C274, H410, and H449 each act as for beta-ketoacyl synthase activity in the active site. The tract at residues 627–938 is malonyl-CoA:ACP transacylase (MAT) domain; sequence YVFTGQGAQW…LAGPIRQCLA (312 aa). Residue S721 is the For malonyltransferase activity of the active site. The N-terminal hotdog fold stretch occupies residues 1027 to 1160; the sequence is HHLLGVRMTE…GVVEGVMTLD (134 aa). The tract at residues 1027 to 1311 is dehydratase (DH) domain; sequence HHLLGVRMTE…RASNIDMTIV (285 aa). One can recognise a PKS/mFAS DH domain in the interval 1027–1334; the sequence is HHLLGVRMTE…SRSLAAHVDG (308 aa). The Proton acceptor; for dehydratase activity role is filled by H1059. The segment at 1179–1334 is C-terminal hotdog fold; sequence NRTMVIPEEL…SRSLAAHVDG (156 aa). Residue D1247 is the Proton donor; for dehydratase activity of the active site. Residues 1735 to 2037 are enoylreductase (ER) domain; it reads LGPVQSSKGD…LVRQGGKVIL (303 aa). A catalytic ketoreductase (KR) domain region spans residues 2062 to 2240; it reads AAYVVAGGMG…FLSMNIGWIE (179 aa). In terms of domain architecture, Carrier spans 2345–2423; it reads TIIDFISSAI…DLAEKVASRS (79 aa). An O-(pantetheine 4'-phosphoryl)serine modification is found at S2383. The choline/carnitine acyltransferase (cAT) domain stretch occupies residues 2831-3062; it reads FDVASLGLRS…SCMITSLLED (232 aa).

It participates in secondary metabolite biosynthesis. In terms of biological role, highly reducing polyketide synthase; part of the gene cluster that mediates the biosynthesis of (2Z,4E,6E,10E)-9-hydroxydodeca-2,4,6,10-tetraenoic acid (BAA), (2E,4E,6E,10E)-9-hydroxydodeca-2,4,6,10-tetraenoic acid (BAB), and (2Z,4E,6E)-octa-2,4,6-trienedioic acid (PBA). The highly reducing polyketide synthase Ba17a is sufficent to produce PBA and BAA. The still to be characterized protein Ba17b leads to an increased production of BAA as well as to the production of the new compound BAB. BAA does not possess insecticidal activity against G.mellonella larvae, however, both BAA and BAB increase the growth of Candida albicans and BAA can mitigate the fungicidal effects of fluconazole over C.albicans, suggesting that generalist pathogens such as M.anisopliae, can potentially manipulate the yeast microbiota found in arthropods (and anywhere else) by the activity of compounds as BAA and BAB. The protein is Highly reducing polyketide synthase 17 of Metarhizium anisopliae (Entomophthora anisopliae).